The following is a 749-amino-acid chain: Disintegrin and metalloproteinase domain-containing protein 10 (749 aa).

The N-terminal stretch at 1–19 is a signal peptide; it reads MVLPTVLILLLSWAAGLGG. Positions 20-214 are excised as a propeptide; it reads QYGNPLNKYI…SGPELLRKKR (195 aa). Over 20–673 the chain is Extracellular; that stretch reads QYGNPLNKYI…SPQLYENIAE (654 aa). The Cysteine switch signature appears at 171 to 178; that stretch reads GGCADHSV. Cysteine 173 serves as a coordination point for Zn(2+). Residues 221–457 enclose the Peptidase M12B domain; sequence NTCQLYIQTD…KRNNCFVESG (237 aa). 17 cysteine pairs are disulfide-bonded: cysteine 223–cysteine 314, cysteine 345–cysteine 452, cysteine 400–cysteine 436, cysteine 461–cysteine 496, cysteine 472–cysteine 485, cysteine 474–cysteine 480, cysteine 484–cysteine 516, cysteine 504–cysteine 512, cysteine 511–cysteine 537, cysteine 525–cysteine 544, cysteine 531–cysteine 563, cysteine 556–cysteine 568, cysteine 573–cysteine 599, cysteine 581–cysteine 608, cysteine 583–cysteine 598, cysteine 595–cysteine 640, and cysteine 633–cysteine 646. Residues asparagine 268 and asparagine 279 are each glycosylated (N-linked (GlcNAc...) asparagine). Histidine 384 provides a ligand contact to Zn(2+). Glutamate 385 is a catalytic residue. Zn(2+) contacts are provided by histidine 388 and histidine 394. N-linked (GlcNAc...) asparagine glycosylation occurs at asparagine 440. One can recognise a Disintegrin domain in the interval 458–552; the sequence is QPICGNGMVE…LCPASDPKPN (95 aa). Residue asparagine 552 is glycosylated (N-linked (GlcNAc...) asparagine). A helical transmembrane segment spans residues 674–694; the sequence is WIVAHWWAVLLMGIALIMLMA. At 695–749 the chain is on the cytoplasmic side; the sequence is GFIKICSVHTPSSNPKLPPPKPLPGTLKRRRPPQPIQQPPRQRPRESYQMGHMRR. Residues 705-749 form a disordered region; sequence PSSNPKLPPPKPLPGTLKRRRPPQPIQQPPRQRPRESYQMGHMRR. Positions 709–716 match the SH3-binding motif; that stretch reads PKLPPPKP. Threonine 720 carries the phosphothreonine modification. The SH3-binding signature appears at 723–729; sequence RRRPPQP. Positions 735–749 are interaction with AP2A1, AP2A2 and AP2M1; it reads RQRPRESYQMGHMRR.

In terms of assembly, forms a ternary EFNA5-EPHA3-ADAM10 complex mediating EFNA5 extracellular domain shedding by ADAM10 which regulates the EFNA5-EPHA3 complex internalization and function, the cleavage occurs in trans, with ADAM10 and its substrate being on the membranes of opposing cells. Interacts with the clathrin adapter AP2 complex subunits AP2A1, AP2A2, AP2B1, and AP2M1; this interaction facilitates ADAM10 endocytosis from the plasma membrane during long-term potentiation in hippocampal neurons. Forms a ternary complex composed of ADAM10, EPHA4 and CADH1; within the complex, ADAM10 cleaves CADH1 which disrupts adherens junctions. Interacts with EPHA2. Interacts with NGF in a divalent cation-dependent manner. Interacts with TSPAN14; the interaction promotes ADAM10 maturation and cell surface expression. Interacts with TSPAN5, TSPAN10, TSPAN14, TSPAN15, TSPAN17 and TSPAN33; these interactions regulate ADAM10 substrate specificity, endocytosis and turnover. Interacts (via extracellular domain) with TSPAN33 (via extracellular domain) and (via cytoplasmic domain) with AFDN; interaction with TSPAN33 allows the docking of ADAM10 to zonula adherens through a PDZ11-dependent interaction between TSPAN33 and PLEKHA7 while interaction with AFDN locks ADAM10 at zonula adherens. Interacts with DLG1; this interaction recruits ADAM10 to the cell membrane during long-term depression in hippocampal neurons. Interacts (via extracellular domain) with BACE1 (via extracellular domain). Interacts with FAM171A1. Zn(2+) serves as cofactor. In terms of processing, the precursor is cleaved by furin and PCSK7. In terms of tissue distribution, expressed in the brain, specifically in neurons and astrocytes (at protein level). Expressed in inner and outer pillar cells of the organ of Corti (at protein level). Expressed in kidney and lung.

Its subcellular location is the cell membrane. The protein resides in the golgi apparatus membrane. The protein localises to the cytoplasmic vesicle. It is found in the clathrin-coated vesicle. It localises to the cell projection. Its subcellular location is the axon. The protein resides in the dendrite. The protein localises to the cell junction. It is found in the adherens junction. It localises to the cytoplasm. The enzyme catalyses Endopeptidase of broad specificity.. Its activity is regulated as follows. Catalytically inactive when the propeptide is intact and associated with the mature enzyme. The disintegrin and cysteine-rich regions modulate access of substrates to exerts an inhibitory effect on the cleavage of ADAM10 substrates. Functionally, transmembrane metalloprotease which mediates the ectodomain shedding of a myriad of transmembrane proteins, including adhesion proteins, growth factor precursors and cytokines being essential for development and tissue homeostasis. Associates with six members of the tetraspanin superfamily TspanC8 which regulate its exit from the endoplasmic reticulum and its substrate selectivity. Cleaves the membrane-bound precursor of TNF-alpha to its mature soluble form. Responsible for the proteolytical release of soluble JAM3 from endothelial cells surface. Responsible for the proteolytic release of several other cell-surface proteins, including heparin-binding epidermal growth-like factor, ephrin-A2, CD44, CDH2 and for constitutive and regulated alpha-secretase cleavage of amyloid precursor protein (APP) at '687-Lys-|-Leu-688'. Contributes to the normal cleavage of the cellular prion protein. Involved in the cleavage of the adhesion molecule L1 at the cell surface and in released membrane vesicles, suggesting a vesicle-based protease activity. Also controls the proteolytic processing of Notch and mediates lateral inhibition during neurogenesis. Required for the development of type 1 transitional B cells into marginal zone B cells, probably by cleaving Notch. Responsible for the FasL ectodomain shedding and for the generation of the remnant ADAM10-processed FasL (FasL APL) transmembrane form. Also cleaves the ectodomain of the integral membrane proteins CORIN and ITM2B. Mediates the proteolytic cleavage of LAG3, leading to release the secreted form of LAG3. Mediates the proteolytic cleavage of IL6R and IL11RA, leading to the release of secreted forms of IL6R and IL11RA. Enhances the cleavage of CHL1 by BACE1. Cleaves NRCAM. Cleaves TREM2, resulting in shedding of the TREM2 ectodomain. Involved in the development and maturation of glomerular and coronary vasculature. During development of the cochlear organ of Corti, promotes pillar cell separation by forming a ternary complex with CADH1 and EPHA4 and cleaving CADH1 at adherens junctions. May regulate the EFNA5-EPHA3 signaling. The chain is Disintegrin and metalloproteinase domain-containing protein 10 (Adam10) from Mus musculus (Mouse).